A 267-amino-acid polypeptide reads, in one-letter code: Aliphatic sulfonates import ATP-binding protein SsuB 1 (267 aa).

In terms of domain architecture, ABC transporter spans 35–249 (VRVRGLRRVF…RRADPAFDRL (215 aa)). 67–74 (GRSGSGKS) is an ATP binding site.

The protein belongs to the ABC transporter superfamily. Aliphatic sulfonates importer (TC 3.A.1.17.2) family. As to quaternary structure, the complex is composed of two ATP-binding proteins (SsuB), two transmembrane proteins (SsuC) and a solute-binding protein (SsuA).

The protein localises to the cell membrane. The catalysed reaction is ATP + H2O + aliphatic sulfonate-[sulfonate-binding protein]Side 1 = ADP + phosphate + aliphatic sulfonateSide 2 + [sulfonate-binding protein]Side 1.. Functionally, part of the ABC transporter complex SsuABC involved in aliphatic sulfonates import. Responsible for energy coupling to the transport system. The polypeptide is Aliphatic sulfonates import ATP-binding protein SsuB 1 (Frankia alni (strain DSM 45986 / CECT 9034 / ACN14a)).